Consider the following 84-residue polypeptide: Putative membrane protein insertion efficiency factor (84 aa).

Belongs to the UPF0161 family.

It localises to the cell inner membrane. In terms of biological role, could be involved in insertion of integral membrane proteins into the membrane. This Nostoc sp. (strain PCC 7120 / SAG 25.82 / UTEX 2576) protein is Putative membrane protein insertion efficiency factor.